Consider the following 245-residue polypeptide: tRNA1(Val) (adenine(37)-N6)-methyltransferase (245 aa).

The protein belongs to the methyltransferase superfamily. tRNA (adenine-N(6)-)-methyltransferase family.

It is found in the cytoplasm. It catalyses the reaction adenosine(37) in tRNA1(Val) + S-adenosyl-L-methionine = N(6)-methyladenosine(37) in tRNA1(Val) + S-adenosyl-L-homocysteine + H(+). In terms of biological role, specifically methylates the adenine in position 37 of tRNA(1)(Val) (anticodon cmo5UAC). This is tRNA1(Val) (adenine(37)-N6)-methyltransferase from Klebsiella pneumoniae subsp. pneumoniae (strain ATCC 700721 / MGH 78578).